The primary structure comprises 390 residues: 1-deoxy-D-xylulose 5-phosphate reductoisomerase (390 aa).

8 residues coordinate NADPH: Thr-10, Gly-11, Ser-12, Ile-13, Gly-36, Arg-37, Asn-38, and Asn-121. Lys-122 is a 1-deoxy-D-xylulose 5-phosphate binding site. NADPH is bound at residue Glu-123. Mn(2+) is bound at residue Asp-147. Positions 148, 149, 173, and 196 each coordinate 1-deoxy-D-xylulose 5-phosphate. Glu-149 provides a ligand contact to Mn(2+). NADPH is bound at residue Gly-202. 1-deoxy-D-xylulose 5-phosphate-binding residues include Ser-209, Asn-214, Lys-215, and Glu-218. Glu-218 contacts Mn(2+). The segment at 367–390 is disordered; the sequence is AASEHGRREAEKRVGARAHAPASR. Residues 370-380 show a composition bias toward basic and acidic residues; that stretch reads EHGRREAEKRV.

It belongs to the DXR family. Requires Mg(2+) as cofactor. Mn(2+) is required as a cofactor.

It catalyses the reaction 2-C-methyl-D-erythritol 4-phosphate + NADP(+) = 1-deoxy-D-xylulose 5-phosphate + NADPH + H(+). It functions in the pathway isoprenoid biosynthesis; isopentenyl diphosphate biosynthesis via DXP pathway; isopentenyl diphosphate from 1-deoxy-D-xylulose 5-phosphate: step 1/6. Functionally, catalyzes the NADPH-dependent rearrangement and reduction of 1-deoxy-D-xylulose-5-phosphate (DXP) to 2-C-methyl-D-erythritol 4-phosphate (MEP). The protein is 1-deoxy-D-xylulose 5-phosphate reductoisomerase of Anaeromyxobacter dehalogenans (strain 2CP-1 / ATCC BAA-258).